We begin with the raw amino-acid sequence, 90 residues long: Sakacin-A immunity factor (90 aa).

Imparts immunity to sakacin-A to naturally sensitive host strains. This chain is Sakacin-A immunity factor (saiA), found in Latilactobacillus sakei (Lactobacillus sakei).